Here is a 75-residue protein sequence, read N- to C-terminus: MALFDDVKEVVVEQLNVSPDEVKEDSKFVEDLGADSLDVVELVMALEEKFDIEIPDDQAEAIATVGDAIKFIENV.

Residues Met-1–Val-75 form the Carrier domain. The residue at position 36 (Ser-36) is an O-(pantetheine 4'-phosphoryl)serine.

Belongs to the acyl carrier protein (ACP) family. In terms of processing, 4'-phosphopantetheine is transferred from CoA to a specific serine of apo-ACP by AcpS. This modification is essential for activity because fatty acids are bound in thioester linkage to the sulfhydryl of the prosthetic group.

The protein resides in the cytoplasm. It functions in the pathway lipid metabolism; fatty acid biosynthesis. Functionally, carrier of the growing fatty acid chain in fatty acid biosynthesis. The sequence is that of Acyl carrier protein from Sulfurovum sp. (strain NBC37-1).